The following is a 327-amino-acid chain: rRNA 2'-O-methyltransferase fibrillarin (327 aa).

Positions 1-93 are disordered; the sequence is MKPGFSPRGG…RGNQSGKNVM (93 aa). Gly residues predominate over residues 7-80; that stretch reads PRGGGFGGRG…GGGRGRGGGR (74 aa). Asymmetric dimethylarginine occurs at positions 8, 15, 21, 24, 28, and 31. Glycyl lysine isopeptide (Lys-Gly) (interchain with G-Cter in SUMO2) cross-links involve residues K90, K108, and K115. Residue K108 is modified to N6-acetyllysine. S122 bears the Phosphoserine mark. K127 bears the N6-acetyllysine mark. S130 and S132 each carry phosphoserine. Glycyl lysine isopeptide (Lys-Gly) (interchain with G-Cter in SUMO2) cross-links involve residues K137, K149, and K164. S-adenosyl-L-methionine-binding positions include 178-179 and 197-198; these read TT and EF. Residues K211 and K212 each carry the N6-acetyllysine modification. S-adenosyl-L-methionine is bound by residues 222 to 223 and 242 to 245; these read DA and DVAQ.

The protein belongs to the methyltransferase superfamily. Fibrillarin family. Component of box C/D small nucleolar ribonucleoprotein (snoRNP) particles that contain SNU13, FBL, NOP5 and NOP56, plus a guide RNA. It is associated with the U3, U8, U13, X and Y small nuclear RNAs. Component of several ribosomal and nucleolar protein complexes. Part of the small subunit (SSU) processome, composed of more than 70 proteins and the RNA chaperone small nucleolar RNA (snoRNA) U3. Interacts with PRMT5 and UTP20. Interacts with DDX5 and C1QBP. Interacts with NOL11. Interacts with PIH1D1. Interacts with RRP1B. Interacts with NOLC1. Interacts with SDE2. Interacts with NOP2 and NOP56. In terms of processing, ubiquitinated. Ubiquitination leads to proteasomal degradation. Deubiquitinated by USP36. Post-translationally, by homology to other fibrillarins, some or all of the N-terminal domain arginines are modified to asymmetric dimethylarginine (DMA). Acetylated by CREBBP/CBP, preventing methylation of 'Gln-105' of histone H2A (H2AQ104me), without affecting rRNA methylation. Deacetylation by SIRT7 restores methylation of 'Gln-105' of histone H2A (H2AQ104me).

The protein localises to the nucleus. It localises to the nucleolus. Its subcellular location is the nucleoplasm. It catalyses the reaction L-glutaminyl-[histone H2A] + S-adenosyl-L-methionine = N(5)-methyl-L-glutaminyl-[histone H2A] + S-adenosyl-L-homocysteine + H(+). It carries out the reaction a ribonucleotide in rRNA + S-adenosyl-L-methionine = a 2'-O-methylribonucleotide in rRNA + S-adenosyl-L-homocysteine + H(+). The catalysed reaction is a ribonucleotide in U6 snRNA + S-adenosyl-L-methionine = a 2'-O-methylribonucleotide in U6 snRNA + S-adenosyl-L-homocysteine + H(+). Functionally, S-adenosyl-L-methionine-dependent methyltransferase that has the ability to methylate both RNAs and proteins. Involved in pre-rRNA processing by catalyzing the site-specific 2'-hydroxyl methylation of ribose moieties in pre-ribosomal RNA. Site specificity is provided by a guide RNA that base pairs with the substrate. Methylation occurs at a characteristic distance from the sequence involved in base pairing with the guide RNA. Probably catalyzes 2'-O-methylation of U6 snRNAs in box C/D RNP complexes. U6 snRNA 2'-O-methylation is required for mRNA splicing fidelity. Also acts as a protein methyltransferase by mediating methylation of 'Gln-105' of histone H2A (H2AQ104me), a modification that impairs binding of the FACT complex and is specifically present at 35S ribosomal DNA locus. Part of the small subunit (SSU) processome, first precursor of the small eukaryotic ribosomal subunit. During the assembly of the SSU processome in the nucleolus, many ribosome biogenesis factors, an RNA chaperone and ribosomal proteins associate with the nascent pre-rRNA and work in concert to generate RNA folding, modifications, rearrangements and cleavage as well as targeted degradation of pre-ribosomal RNA by the RNA exosome. The chain is rRNA 2'-O-methyltransferase fibrillarin (Fbl) from Rattus norvegicus (Rat).